Consider the following 219-residue polypeptide: MDRQVKGILGAKLGMTQVWDNNRVVPVTVVQAGPCVVSQVRSQEKDGYAAVQLAYGAIDPRKVKKPISGHYAKADVAPRRHIVELRTTDAGEYSSGQEVTVEEFPAGISVDVTGKTKGKGYAGPMKRHGFHGLRASHGVERKHRSPGSIGGCATPGRVFKGTRMAGRMGGVRYTVQNLTVQAVDTENNLLLVRGAIPGPKGALVLVRTAAKAKKGGAAK.

Belongs to the universal ribosomal protein uL3 family. In terms of assembly, part of the 50S ribosomal subunit. Forms a cluster with proteins L14 and L19.

Its function is as follows. One of the primary rRNA binding proteins, it binds directly near the 3'-end of the 23S rRNA, where it nucleates assembly of the 50S subunit. The polypeptide is Large ribosomal subunit protein uL3 (Salinispora tropica (strain ATCC BAA-916 / DSM 44818 / JCM 13857 / NBRC 105044 / CNB-440)).